A 357-amino-acid chain; its full sequence is MRPARALIDLQALRHNYRLARELTGAKALAVIKADAYGHGAVRCALALEAEADGFAVACIEEALELRAAGIKAPVLLLEGFFEASELALIAEHDLWCVVHSLWQLEAIERTQLHKPLTVWLKLDSGMHRVGLHPKDYHEAYQRLLASGKVARIVLMSHFARADELDADATAQQIAVFEAARQGLAAECSLRNSPGVLGWPQAPSDWVRPGLMLYGATPFEVAQAEAERLQPVMTLQSRVISVRELPAGEPVGYGAKFVSPRPTRVGVVAMGYADGYPRQAPNGTPVLVAGKRTQLIGRVSMDMLSIDLTDVPEATVGSPVELWGKHVLASEVAAHAGTIPYQIFCNLKRVPRDYIGE.

Lys33 serves as the catalytic Proton acceptor; specific for D-alanine. N6-(pyridoxal phosphate)lysine is present on Lys33. Residue Arg129 participates in substrate binding. Tyr253 acts as the Proton acceptor; specific for L-alanine in catalysis. Residue Met301 coordinates substrate.

The protein belongs to the alanine racemase family. In terms of assembly, homodimer. The cofactor is pyridoxal 5'-phosphate.

The catalysed reaction is L-alanine = D-alanine. Its pathway is amino-acid biosynthesis; D-alanine biosynthesis; D-alanine from L-alanine: step 1/1. Catalyzes the interconversion of L-alanine and D-alanine. Is highly specific for alanine as substrate. May serve both anabolic and catabolic purposes. The protein is Alanine racemase of Pseudomonas taetrolens.